Here is a 342-residue protein sequence, read N- to C-terminus: Cell division protein ZipA (342 aa).

Residues 1-6 (MEDLQL) are Periplasmic-facing. The chain crosses the membrane as a helical span at residues 7–27 (VLFILGAIAIVAVLVHGFWSI). Residues 28-342 (RRQQPKSLKD…DYLHRIRANA (315 aa)) are Cytoplasmic-facing. The interval 33-57 (KSLKDSPMGNFYKQQADKESPPKRV) is disordered. A compositionally biased stretch (basic and acidic residues) spans 47–57 (QADKESPPKRV).

It belongs to the ZipA family. As to quaternary structure, interacts with FtsZ via their C-terminal domains.

Its subcellular location is the cell inner membrane. Essential cell division protein that stabilizes the FtsZ protofilaments by cross-linking them and that serves as a cytoplasmic membrane anchor for the Z ring. Also required for the recruitment to the septal ring of downstream cell division proteins. The polypeptide is Cell division protein ZipA (Shewanella putrefaciens (strain CN-32 / ATCC BAA-453)).